Consider the following 149-residue polypeptide: Deoxyuridine 5'-triphosphate nucleotidohydrolase (149 aa).

Residues 68–70 (RSG), N81, and 85–87 (LID) each bind substrate.

Belongs to the dUTPase family. It depends on Mg(2+) as a cofactor.

It catalyses the reaction dUTP + H2O = dUMP + diphosphate + H(+). The protein operates within pyrimidine metabolism; dUMP biosynthesis; dUMP from dCTP (dUTP route): step 2/2. Functionally, this enzyme is involved in nucleotide metabolism: it produces dUMP, the immediate precursor of thymidine nucleotides and it decreases the intracellular concentration of dUTP so that uracil cannot be incorporated into DNA. In Aromatoleum aromaticum (strain DSM 19018 / LMG 30748 / EbN1) (Azoarcus sp. (strain EbN1)), this protein is Deoxyuridine 5'-triphosphate nucleotidohydrolase.